The primary structure comprises 197 residues: Peptidyl-tRNA hydrolase (197 aa).

Residue Y18 coordinates tRNA. H23 functions as the Proton acceptor in the catalytic mechanism. Positions 69, 71, and 117 each coordinate tRNA.

The protein belongs to the PTH family. As to quaternary structure, monomer.

The protein localises to the cytoplasm. It catalyses the reaction an N-acyl-L-alpha-aminoacyl-tRNA + H2O = an N-acyl-L-amino acid + a tRNA + H(+). In terms of biological role, hydrolyzes ribosome-free peptidyl-tRNAs (with 1 or more amino acids incorporated), which drop off the ribosome during protein synthesis, or as a result of ribosome stalling. Its function is as follows. Catalyzes the release of premature peptidyl moieties from peptidyl-tRNA molecules trapped in stalled 50S ribosomal subunits, and thus maintains levels of free tRNAs and 50S ribosomes. The chain is Peptidyl-tRNA hydrolase from Tolumonas auensis (strain DSM 9187 / NBRC 110442 / TA 4).